The chain runs to 396 residues: Putative F-box/kelch-repeat protein At4g11770 (396 aa).

Residues proline 9 to arginine 55 enclose the F-box domain. 3 Kelch repeats span residues tyrosine 151–glycine 197, lysine 198–lysine 248, and tyrosine 250–lysine 296.

The chain is Putative F-box/kelch-repeat protein At4g11770 from Arabidopsis thaliana (Mouse-ear cress).